We begin with the raw amino-acid sequence, 364 residues long: Coproporphyrin III ferrochelatase (364 aa).

2 residues coordinate Fe-coproporphyrin III: Arg-29 and Tyr-118. Residues His-169 and Glu-250 each contribute to the Fe(2+) site.

It belongs to the ferrochelatase family.

Its subcellular location is the cytoplasm. It carries out the reaction Fe-coproporphyrin III + 2 H(+) = coproporphyrin III + Fe(2+). It functions in the pathway porphyrin-containing compound metabolism; protoheme biosynthesis. Its function is as follows. Involved in coproporphyrin-dependent heme b biosynthesis. Catalyzes the insertion of ferrous iron into coproporphyrin III to form Fe-coproporphyrin III. In Streptococcus pneumoniae serotype 4 (strain ATCC BAA-334 / TIGR4), this protein is Coproporphyrin III ferrochelatase.